A 1124-amino-acid chain; its full sequence is tRNA (34-2'-O)-methyltransferase regulator WDR6 (1124 aa).

An N-acetylmethionine modification is found at Met1. WD repeat units follow at residues 53-97 (MKRV…IVKI), 105-143 (RELW…LYDP), 147-189 (CSLQ…VWYP), 200-238 (VPDR…IWKV), 247-285 (RVQN…VWSH), 289-327 (ILQA…LWHL), 335-376 (SGVF…LYDL), 381-422 (WEQL…VVPI), 425-470 (PTAA…ISAA), 476-520 (IFVK…LYPS), 557-596 (PMST…FVRG), 602-640 (VLRQ…VWSP), 643-682 (HEKL…LYRA), 743-789 (LIDI…VWGV), 852-897 (RHRH…LFLL), 905-950 (QLLA…FWDL), 974-1015 (GSPC…VFVL), 1039-1076 (EEYS…FWRL), and 1082-1124 (TFMN…NWYD).

Belongs to the WD repeat WDR6 family. As to quaternary structure, interacts with FTSJ1; the interaction is direct, and required for 2'-O-methylation of position 34 in substrate tRNAs. Interacts with IRS4. Interacts with STK11/LKB1.

Its subcellular location is the cytoplasm. Its function is as follows. Together with methyltransferase FTSJ1, methylates the 2'-O-ribose of nucleotides at position 34 of the tRNA anticodon loop of substrate tRNAs. Required for the correct positioning of the substrate tRNA for methylation. Required to suppress amino acid starvation-induced autophagy. Enhances the STK11/LKB1-induced cell growth suppression activity. The polypeptide is tRNA (34-2'-O)-methyltransferase regulator WDR6 (WDR6) (Bos taurus (Bovine)).